The primary structure comprises 364 residues: Chorismate synthase (364 aa).

A disordered region spans residues 41 to 60 (MQHDLDRRRPGTSRYTTARR). Positions 48 and 54 each coordinate NADP(+). FMN is bound by residues 125–127 (RSS), 238–239 (NA), glycine 278, 293–297 (KPTSS), and arginine 319.

It belongs to the chorismate synthase family. In terms of assembly, homotetramer. The cofactor is FMNH2.

The catalysed reaction is 5-O-(1-carboxyvinyl)-3-phosphoshikimate = chorismate + phosphate. It participates in metabolic intermediate biosynthesis; chorismate biosynthesis; chorismate from D-erythrose 4-phosphate and phosphoenolpyruvate: step 7/7. Functionally, catalyzes the anti-1,4-elimination of the C-3 phosphate and the C-6 proR hydrogen from 5-enolpyruvylshikimate-3-phosphate (EPSP) to yield chorismate, which is the branch point compound that serves as the starting substrate for the three terminal pathways of aromatic amino acid biosynthesis. This reaction introduces a second double bond into the aromatic ring system. The polypeptide is Chorismate synthase (Shewanella sp. (strain ANA-3)).